A 121-amino-acid polypeptide reads, in one-letter code: Small ribosomal subunit protein uS13 (121 aa).

Positions 93 to 121 are disordered; sequence KGLPLRGQKTKTNARTRKGPKKTIANKKK.

This sequence belongs to the universal ribosomal protein uS13 family. As to quaternary structure, part of the 30S ribosomal subunit. Forms a loose heterodimer with protein S19. Forms two bridges to the 50S subunit in the 70S ribosome.

Functionally, located at the top of the head of the 30S subunit, it contacts several helices of the 16S rRNA. In the 70S ribosome it contacts the 23S rRNA (bridge B1a) and protein L5 of the 50S subunit (bridge B1b), connecting the 2 subunits; these bridges are implicated in subunit movement. Contacts the tRNAs in the A and P-sites. In Clostridium perfringens (strain ATCC 13124 / DSM 756 / JCM 1290 / NCIMB 6125 / NCTC 8237 / Type A), this protein is Small ribosomal subunit protein uS13.